Reading from the N-terminus, the 335-residue chain is MGFGDFDFLCNKSPLPLCMLVGPYDKPTTDQTPLLNGIGLMSECYPRSIELANTIIFQVGNTFIHIGALPVILIMMYTVKGKYTAIGRKELFHFLSCFLFLTCMSLVVDAGVAPPGSAAYPYLVAIQNGAISGTMWSLVNFGFLGFQFYEDGTRRAMLFLRGTTLCAFLLTFIISLFTFIPSWGSDAIGPHNTVGLFVVLYLFNLIFVVVYILSQFALAIFILQDIWMIGAVALGTFFFVASQILLYPISSIICKQVKHYIDGTFFATVTNLFAVMMVYKFWDMSTKEDLEFSVGQKDNMWETKELLGEDNGMSRYEVNGSEYAGSTFALNQHQF.

Transmembrane regions (helical) follow at residues 55-75 (IIFQ…ILIM), 92-112 (FHFL…DAGV), 129-149 (GAIS…FQFY), 164-184 (TLCA…PSWG), 193-213 (TVGL…VYIL), 220-240 (IFIL…FFFV), and 259-279 (HYID…MMVY).

It belongs to the CHS7 family. Interacts with CHS3.

Its subcellular location is the endoplasmic reticulum membrane. In terms of biological role, chaperone required for the export of the chitin synthase CHS3 from the endoplasmic reticulum. This Yarrowia lipolytica (strain CLIB 122 / E 150) (Yeast) protein is Chitin synthase export chaperone (CHS7).